A 77-amino-acid polypeptide reads, in one-letter code: Small ribosomal subunit protein uS17 (77 aa).

This sequence belongs to the universal ribosomal protein uS17 family. Part of the 30S ribosomal subunit.

In terms of biological role, one of the primary rRNA binding proteins, it binds specifically to the 5'-end of 16S ribosomal RNA. The protein is Small ribosomal subunit protein uS17 of Rickettsia bellii (strain OSU 85-389).